The chain runs to 417 residues: UPF0597 protein FMG_0209 (417 aa).

The protein belongs to the UPF0597 family.

This Finegoldia magna (strain ATCC 29328 / DSM 20472 / WAL 2508) (Peptostreptococcus magnus) protein is UPF0597 protein FMG_0209.